Reading from the N-terminus, the 91-residue chain is MIPRNFFFTILICAFNVCATFTAVATASPDCIGPFASYALFAFVTCICVCSIVCLVINFFQLVDWIFVRIAYLRHHPEYRNQNVAALLRLI.

Residues 1–22 (MIPRNFFFTILICAFNVCATFT) form the signal peptide. Topologically, residues 23-34 (AVATASPDCIGP) are lumenal. The chain crosses the membrane as a helical span at residues 35-60 (FASYALFAFVTCICVCSIVCLVINFF). Topologically, residues 61–91 (QLVDWIFVRIAYLRHHPEYRNQNVAALLRLI) are cytoplasmic.

Belongs to the adenoviridae E3B family.

It localises to the host endoplasmic reticulum membrane. Functionally, down-regulates the EGF receptor. The polypeptide is Early E3B 10.4 kDa protein (Homo sapiens (Human)).